Consider the following 505-residue polypeptide: MAQVINTNSLSLLTQNNLNKSQSSLSSAIERLSSGLRINSAKDDAAGQAIANRFTSNIKGLTQASRNANDGISIAQTTEGALNEINNNLQRVRELSVQATNGTNSDSDLKSIQDEIQQRLEEIDRVSNQTQFNGVKVLSQDNQMKIQVGANDGETITIDLQKIDVKSLGLDGFNVNGPKEATVGDLKSSFKNVTGYDTYAAGADKYRVDINSGAVVTDAVAPNKVYVNAANGQLTTDDAENNTAVDLFKTTKSTAGTAEAKAIAGAIKGGKEGDTFDYKGVTFTIDTKTGNDGNGKVSTTINGEKVTLTVADITGGAANVDAATLQSSKNVYTSVVNGQFTFDDKTKNESAKLSDLEANNAVKGESKITVNGAEYTANATGDKVTLAGKTMFIDKTASGVSTLINEDAAAAKKSTANPLASIDSALSKVDAVRSSLGAIQNRFDSAITNLGNTVTNLNSARSRIEDADYATEVSNMSKAQILQQAGTSVLAQANQVPQNVLSLLR.

Belongs to the bacterial flagellin family.

Its subcellular location is the secreted. It is found in the bacterial flagellum. Flagellin is the subunit protein which polymerizes to form the filaments of bacterial flagella. This chain is Flagellin (fliC), found in Salmonella derby.